Here is a 70-residue protein sequence, read N- to C-terminus: MKILEKALLENDSAAEEESRNLRTKRCARKRAWCEKTENCCCPMKCIYAWYNGQSSCDHTISTIWTSCPK.

The N-terminal stretch at 1 to 26 (MKILEKALLENDSAAEEESRNLRTKR) is a signal peptide. 4 disulfides stabilise this stretch: cysteine 27/cysteine 41, cysteine 34/cysteine 46, cysteine 40/cysteine 57, and cysteine 42/cysteine 68.

Expressed by the venom gland.

Its subcellular location is the secreted. Its function is as follows. Inhibits tetrodotoxin-sensitive sodium channels (Nav). Intracranial injection into mice causes strong convulsions and death. Intrathorax injection into crickets causes paralysis prolonged for 2 minutes, followed by recovery. This is Delta-hexatoxin-Mg1b from Macrothele gigas (Japanese funnel web spider).